A 362-amino-acid polypeptide reads, in one-letter code: 11-beta-hydroxysteroid dehydrogenase B (362 aa).

The chain crosses the membrane as a helical; Signal-anchor for type II membrane protein span at residues phenylalanine 10 to isoleucine 30. The Proline-knob motif lies at proline 13–threonine 26. Position 55–81 (glycine 55–arginine 81) interacts with NADP(+). Serine 185 serves as a coordination point for substrate. Tyrosine 198 serves as the catalytic Proton acceptor. Residues tyrosine 198–lysine 202 and lysine 202 contribute to the NADP(+) site. The disordered stretch occupies residues threonine 321–glutamate 362.

It belongs to the short-chain dehydrogenases/reductases (SDR) family. In terms of tissue distribution, expressed in seeds (at protein level). Not expressed in stem, leaf or root (at protein level).

Its subcellular location is the lipid droplet. It localises to the membrane. The enzyme catalyses an 11beta-hydroxysteroid + NADP(+) = an 11-oxosteroid + NADPH + H(+). It carries out the reaction corticosterone + NADP(+) = 11-dehydrocorticosterone + NADPH + H(+). It catalyses the reaction 17beta-estradiol + NADP(+) = estrone + NADPH + H(+). Has dehydrogenase activity against corticosterone (11 beta-hydroxysteroid) and estradiol (17 beta-hydroxysteroid), with similar activities to both sterols in the presence of NADP(+), but negligible activity to either sterol in the presence of NAD(+). May be involved in signal transduction regulated by various sterols. The protein is 11-beta-hydroxysteroid dehydrogenase B of Sesamum indicum (Oriental sesame).